Consider the following 117-residue polypeptide: Immunoglobulin heavy variable 1-46 (117 aa).

Positions 1 to 19 (MDWTWRVFCLLAVAPGAHS) are cleaved as a signal peptide. A framework-1 region spans residues 20–44 (QVQLVQSGAEVKKPGASVKVSCKAS). In terms of domain architecture, Ig-like spans 20–117 (QVQLVQSGAE…EDTAVYYCAR (98 aa)). A disulfide bridge connects residues C41 and C115. The interval 45-52 (GYTFTSYY) is complementarity-determining-1. The tract at residues 53 to 69 (MHWVRQAPGQGLEWMGI) is framework-2. The interval 70 to 77 (INPSGGST) is complementarity-determining-2. Residues 78 to 115 (SYAQKFQGRVTMTRDTSTSTVYMELSSLRSEDTAVYYC) are framework-3. The tract at residues 116-117 (AR) is complementarity-determining-3.

Immunoglobulins are composed of two identical heavy chains and two identical light chains; disulfide-linked.

The protein resides in the secreted. The protein localises to the cell membrane. In terms of biological role, v region of the variable domain of immunoglobulin heavy chains that participates in the antigen recognition. Immunoglobulins, also known as antibodies, are membrane-bound or secreted glycoproteins produced by B lymphocytes. In the recognition phase of humoral immunity, the membrane-bound immunoglobulins serve as receptors which, upon binding of a specific antigen, trigger the clonal expansion and differentiation of B lymphocytes into immunoglobulins-secreting plasma cells. Secreted immunoglobulins mediate the effector phase of humoral immunity, which results in the elimination of bound antigens. The antigen binding site is formed by the variable domain of one heavy chain, together with that of its associated light chain. Thus, each immunoglobulin has two antigen binding sites with remarkable affinity for a particular antigen. The variable domains are assembled by a process called V-(D)-J rearrangement and can then be subjected to somatic hypermutations which, after exposure to antigen and selection, allow affinity maturation for a particular antigen. This is Immunoglobulin heavy variable 1-46 from Homo sapiens (Human).